Consider the following 340-residue polypeptide: Biotin synthase (340 aa).

The region spanning 56–283 is the Radical SAM core domain; sequence NAVQLSTLLS…KAVVRLSAGR (228 aa). Positions 71, 75, and 78 each coordinate [4Fe-4S] cluster. 4 residues coordinate [2Fe-2S] cluster: Cys-115, Cys-146, Cys-206, and Arg-278.

It belongs to the radical SAM superfamily. Biotin synthase family. In terms of assembly, homodimer. Requires [4Fe-4S] cluster as cofactor. [2Fe-2S] cluster serves as cofactor.

It catalyses the reaction (4R,5S)-dethiobiotin + (sulfur carrier)-SH + 2 reduced [2Fe-2S]-[ferredoxin] + 2 S-adenosyl-L-methionine = (sulfur carrier)-H + biotin + 2 5'-deoxyadenosine + 2 L-methionine + 2 oxidized [2Fe-2S]-[ferredoxin]. It functions in the pathway cofactor biosynthesis; biotin biosynthesis; biotin from 7,8-diaminononanoate: step 2/2. In terms of biological role, catalyzes the conversion of dethiobiotin (DTB) to biotin by the insertion of a sulfur atom into dethiobiotin via a radical-based mechanism. The protein is Biotin synthase of Burkholderia lata (strain ATCC 17760 / DSM 23089 / LMG 22485 / NCIMB 9086 / R18194 / 383).